The primary structure comprises 338 residues: MRILGIETSCDETGVAIYDDEKGLLAHQLYSQVKLHADYGGVVPELASRDHVKKTIPLIQAALNDAGMTKDDIDGIAYTAGPGLVGALLVGSTIGRSIAYAWDVPAIPVHHMEGHLLAPMLEDNPPEFPFVALLVSGGHTLMVEVKGIGDYQILGESVDDAAGEAFDKTAKLMGLDYPGGPRLSKLAEAGVKGRFKFPRPMTDRPGLDFSFSGLKTFAANTIRANDDDEQTRADIAFAFQEAVADTLAIKCRRALKQTGMKRLVMAGGVSANTYLRQELEAMMKKIGGEVFYPRTEFCTDNGAMIAYAGMQRLKNGETTDLAVQAKPRWPIDQLAPIK.

Residues H111 and H115 each coordinate Fe cation. Residues 134–138, D167, G180, and N272 each bind substrate; that span reads LVSGG. Residue D300 participates in Fe cation binding.

The protein belongs to the KAE1 / TsaD family. Fe(2+) serves as cofactor.

The protein localises to the cytoplasm. It carries out the reaction L-threonylcarbamoyladenylate + adenosine(37) in tRNA = N(6)-L-threonylcarbamoyladenosine(37) in tRNA + AMP + H(+). Its function is as follows. Required for the formation of a threonylcarbamoyl group on adenosine at position 37 (t(6)A37) in tRNAs that read codons beginning with adenine. Is involved in the transfer of the threonylcarbamoyl moiety of threonylcarbamoyl-AMP (TC-AMP) to the N6 group of A37, together with TsaE and TsaB. TsaD likely plays a direct catalytic role in this reaction. This chain is tRNA N6-adenosine threonylcarbamoyltransferase, found in Aliivibrio salmonicida (strain LFI1238) (Vibrio salmonicida (strain LFI1238)).